Reading from the N-terminus, the 360-residue chain is Magnesium transporter NIPA2 (360 aa).

Residues methionine 1–aspartate 9 lie on the Extracellular side of the membrane. The helical transmembrane segment at phenylalanine 10–leucine 30 threads the bilayer. Residues lysine 31–glutamate 56 are Cytoplasmic-facing. The helical transmembrane segment at tryptophan 57 to tyrosine 77 threads the bilayer. A topological domain (extracellular) is located at residue alanine 78. The chain crosses the membrane as a helical span at residues phenylalanine 79 to leucine 99. The Cytoplasmic portion of the chain corresponds to serine 100–arginine 107. Residues leucine 108 to isoleucine 128 form a helical membrane-spanning segment. Residues histidine 129–proline 149 lie on the Extracellular side of the membrane. A helical membrane pass occupies residues glycine 150–glycine 170. The Cytoplasmic segment spans residues proline 171 to glutamine 175. A helical membrane pass occupies residues threonine 176–alanine 196. Topologically, residues lysine 197–histidine 215 are extracellular. A helical membrane pass occupies residues proline 216 to leucine 236. Topologically, residues asparagine 237–serine 246 are cytoplasmic. The helical transmembrane segment at isoleucine 247 to leucine 267 threads the bilayer. Residues phenylalanine 268 to aspartate 278 lie on the Extracellular side of the membrane. Residues valine 279–phenylalanine 299 traverse the membrane as a helical segment. Over lysine 300–phenylalanine 360 the chain is Cytoplasmic.

This sequence belongs to the NIPA family.

The protein localises to the cell membrane. It is found in the early endosome. It carries out the reaction Mg(2+)(in) = Mg(2+)(out). In terms of biological role, acts as a selective Mg(2+) transporter. In Bos taurus (Bovine), this protein is Magnesium transporter NIPA2 (NIPA2).